We begin with the raw amino-acid sequence, 135 residues long: Cytochrome b5, seed isoform (135 aa).

Residues 5–81 form the Cytochrome b5 heme-binding domain; that stretch reads SKVFTLAEVS…LDEYYVGDID (77 aa). Heme is bound by residues His-40 and His-64. Residues 107 to 127 traverse the membrane as a helical segment; that stretch reads FIVKLLQFLVPLIILGVAFGV.

Belongs to the cytochrome b5 family. As to expression, specifically expressed in developing seeds.

Its subcellular location is the endoplasmic reticulum membrane. It is found in the microsome membrane. Cytochrome b5 is a membrane bound hemoprotein which function as an electron carrier for several membrane bound oxygenases. May play a key role in the modification by desaturation of fatty acids in the endoplasmic reticulum, which in the developing seed is utilized for membrane synthesis and in the developmentally regulated production of large amounts of storage lipids. This is Cytochrome b5, seed isoform from Nicotiana tabacum (Common tobacco).